Consider the following 569-residue polypeptide: Pyruvate decarboxylase (569 aa).

Asp38 and His124 together coordinate pyruvate. Residues Thr398 and 421–423 (GSI) contribute to the thiamine diphosphate site. Asp451 is a binding site for Mg(2+). Thiamine diphosphate is bound by residues 452–453 (GS) and 478–483 (NEGYTI). Mg(2+) contacts are provided by Asn478 and Gly480. A pyruvate-binding site is contributed by Glu484.

This sequence belongs to the TPP enzyme family. As to quaternary structure, homotetramer. It depends on Mg(2+) as a cofactor. Thiamine diphosphate serves as cofactor.

The enzyme catalyses a 2-oxocarboxylate + H(+) = an aldehyde + CO2. It catalyses the reaction pyruvate + H(+) = acetaldehyde + CO2. The chain is Pyruvate decarboxylase (pdcA) from Aspergillus fumigatus (strain ATCC MYA-4609 / CBS 101355 / FGSC A1100 / Af293) (Neosartorya fumigata).